Consider the following 869-residue polypeptide: Bifunctional uridylyltransferase/uridylyl-removing enzyme (869 aa).

The interval methionine 1–serine 332 is uridylyltransferase. The segment at leucine 333 to leucine 691 is uridylyl-removing. Residues valine 450–leucine 572 form the HD domain. 2 consecutive ACT domains span residues glutamate 692 to proline 774 and arginine 798 to valine 869.

Belongs to the GlnD family. Requires Mg(2+) as cofactor.

The enzyme catalyses [protein-PII]-L-tyrosine + UTP = [protein-PII]-uridylyl-L-tyrosine + diphosphate. The catalysed reaction is [protein-PII]-uridylyl-L-tyrosine + H2O = [protein-PII]-L-tyrosine + UMP + H(+). Its activity is regulated as follows. Uridylyltransferase (UTase) activity is inhibited by glutamine, while glutamine activates uridylyl-removing (UR) activity. In terms of biological role, modifies, by uridylylation and deuridylylation, the PII regulatory proteins (GlnB and homologs), in response to the nitrogen status of the cell that GlnD senses through the glutamine level. Under low glutamine levels, catalyzes the conversion of the PII proteins and UTP to PII-UMP and PPi, while under higher glutamine levels, GlnD hydrolyzes PII-UMP to PII and UMP (deuridylylation). Thus, controls uridylylation state and activity of the PII proteins, and plays an important role in the regulation of nitrogen assimilation and metabolism. In Xanthomonas oryzae pv. oryzae (strain MAFF 311018), this protein is Bifunctional uridylyltransferase/uridylyl-removing enzyme.